Consider the following 612-residue polypeptide: Protein hinderin (612 aa).

Serine 20 is subject to Phosphoserine. Residues 90–166 are a coiled coil; the sequence is LKDLCLEDKR…CQELLSLYQK (77 aa). The residue at position 178 (serine 178) is a Phosphoserine. A coiled-coil region spans residues 362 to 406; the sequence is IEKQLSEDRRQQLMLQKMELEIEKERLQHLLAQQETKLLLKQQQL. A compositionally biased stretch (polar residues) spans 462 to 477; it reads STSFKKCPDSPNSGQN. Disordered regions lie at residues 462–484 and 509–598; these read STSF…KKTV and ETVT…RSPE. 3 positions are modified to phosphoserine: serine 471, serine 527, and serine 558. Composition is skewed to polar residues over residues 555-568 and 575-585; these read QSLS…SQPH and TWSTLRPTPQK.

Interacts (via N- and C-terminal domains) with SMC3 (via central hinge region).

Competes with SMC1 for binding to SMC3. May affect the availability of SMC3 to engage in the formation of multimeric protein complexes. This chain is Protein hinderin (Kiaa1328), found in Mus musculus (Mouse).